The primary structure comprises 276 residues: uncharacterized protein (276 aa).

ATP is bound at residue 15 to 22 (GKGGVGKS). 4Fe-4S ferredoxin-type domains lie at 68 to 96 (EIYEINDDCIRCGKCLDVCQFDAIGDFKI) and 92 to 121 (GDFKINPILCEGCGACELICEFDAIEPIKR). Residues Cys-76, Cys-79, Cys-82, Cys-86, Cys-101, Cys-104, Cys-107, and Cys-111 each coordinate [4Fe-4S] cluster.

This is an uncharacterized protein from Methanocaldococcus jannaschii (strain ATCC 43067 / DSM 2661 / JAL-1 / JCM 10045 / NBRC 100440) (Methanococcus jannaschii).